The chain runs to 268 residues: Phosphatidylglycerol--prolipoprotein diacylglyceryl transferase (268 aa).

The next 7 helical transmembrane spans lie at 27–47, 66–86, 104–124, 130–150, 181–201, 208–228, and 242–262; these read PALR…MWLL, LLFY…VLFY, GGMS…YIAW, FFAV…AGRI, PSQL…LYWF, VGAV…IVET, and FMTM…YLIL. R149 is an a 1,2-diacyl-sn-glycero-3-phospho-(1'-sn-glycerol) binding site.

The protein belongs to the Lgt family.

The protein resides in the cell inner membrane. The catalysed reaction is L-cysteinyl-[prolipoprotein] + a 1,2-diacyl-sn-glycero-3-phospho-(1'-sn-glycerol) = an S-1,2-diacyl-sn-glyceryl-L-cysteinyl-[prolipoprotein] + sn-glycerol 1-phosphate + H(+). Its pathway is protein modification; lipoprotein biosynthesis (diacylglyceryl transfer). In terms of biological role, catalyzes the transfer of the diacylglyceryl group from phosphatidylglycerol to the sulfhydryl group of the N-terminal cysteine of a prolipoprotein, the first step in the formation of mature lipoproteins. In Shewanella sp. (strain ANA-3), this protein is Phosphatidylglycerol--prolipoprotein diacylglyceryl transferase.